The chain runs to 1071 residues: ATP-dependent helicase/deoxyribonuclease subunit B (1071 aa).

The protein belongs to the helicase family. AddB/RexB type 2 subfamily. Heterodimer of AddA and RexB. Requires Mg(2+) as cofactor.

The heterodimer acts as both an ATP-dependent DNA helicase and an ATP-dependent, dual-direction single-stranded exonuclease. Recognizes the chi site generating a DNA molecule suitable for the initiation of homologous recombination. This subunit has 5' -&gt; 3' nuclease activity but not helicase activity. This is ATP-dependent helicase/deoxyribonuclease subunit B from Streptococcus pyogenes serotype M4 (strain MGAS10750).